A 132-amino-acid polypeptide reads, in one-letter code: Small ribosomal subunit protein uS8 (132 aa).

This sequence belongs to the universal ribosomal protein uS8 family. In terms of assembly, part of the 30S ribosomal subunit. Contacts proteins S5 and S12.

One of the primary rRNA binding proteins, it binds directly to 16S rRNA central domain where it helps coordinate assembly of the platform of the 30S subunit. The polypeptide is Small ribosomal subunit protein uS8 (Flavobacterium johnsoniae (strain ATCC 17061 / DSM 2064 / JCM 8514 / BCRC 14874 / CCUG 350202 / NBRC 14942 / NCIMB 11054 / UW101) (Cytophaga johnsonae)).